Consider the following 357-residue polypeptide: ATP-dependent 6-phosphofructokinase 2 (357 aa).

Residues Gly12, 80–81 (KG), and 107–110 (GDGS) each bind ATP. Asp108 contacts Mg(2+). Substrate contacts are provided by residues 131–133 (TID), Arg168, 175–177 (MGR), Glu229, Arg272, and 278–281 (HIQR). Catalysis depends on Asp133, which acts as the Proton acceptor.

The protein belongs to the phosphofructokinase type A (PFKA) family. Mixed-substrate PFK group III subfamily. In terms of assembly, homodimer or homotetramer. The cofactor is Mg(2+).

The protein localises to the cytoplasm. It carries out the reaction beta-D-fructose 6-phosphate + ATP = beta-D-fructose 1,6-bisphosphate + ADP + H(+). The protein operates within carbohydrate degradation; glycolysis; D-glyceraldehyde 3-phosphate and glycerone phosphate from D-glucose: step 3/4. With respect to regulation, subject to allosteric activation by ADP and other diphosphonucleosides, and inhibition by phosphoenolpyruvate. Catalyzes the phosphorylation of D-fructose 6-phosphate to fructose 1,6-bisphosphate by ATP, the first committing step of glycolysis. This is ATP-dependent 6-phosphofructokinase 2 from Nostoc sp. (strain PCC 7120 / SAG 25.82 / UTEX 2576).